Here is a 337-residue protein sequence, read N- to C-terminus: ATP-dependent 6-phosphofructokinase (337 aa).

Residue Gly11 coordinates ATP. 21–25 (RAVVR) is a binding site for ADP. ATP is bound by residues 72-73 (RY) and 102-105 (GDGS). Asp103 is a binding site for Mg(2+). 125-127 (TID) is a substrate binding site. Catalysis depends on Asp127, which acts as the Proton acceptor. Arg154 is an ADP binding site. Residues Arg162 and 169–171 (MGR) contribute to the substrate site. ADP is bound by residues 185-187 (GAD) and 214-216 (KNH). Substrate contacts are provided by residues Glu223, Arg245, and 251-254 (HILR).

Belongs to the phosphofructokinase type A (PFKA) family. ATP-dependent PFK group I subfamily. Prokaryotic clade 'B1' sub-subfamily. Homotetramer. Mg(2+) is required as a cofactor.

It localises to the cytoplasm. It catalyses the reaction beta-D-fructose 6-phosphate + ATP = beta-D-fructose 1,6-bisphosphate + ADP + H(+). It participates in carbohydrate degradation; glycolysis; D-glyceraldehyde 3-phosphate and glycerone phosphate from D-glucose: step 3/4. Allosterically activated by ADP and other diphosphonucleosides, and allosterically inhibited by phosphoenolpyruvate. Functionally, catalyzes the phosphorylation of D-fructose 6-phosphate to fructose 1,6-bisphosphate by ATP, the first committing step of glycolysis. The protein is ATP-dependent 6-phosphofructokinase of Streptococcus mutans serotype c (strain ATCC 700610 / UA159).